Consider the following 307-residue polypeptide: N-acetylmuramic acid 6-phosphate etherase (307 aa).

One can recognise an SIS domain in the interval 59–222 (TTKALSQGGK…STGVMVRLGK (164 aa)). Residue glutamate 87 is the Proton donor of the active site. Residue glutamate 118 is part of the active site.

It belongs to the GCKR-like family. MurNAc-6-P etherase subfamily. Homodimer.

It carries out the reaction N-acetyl-D-muramate 6-phosphate + H2O = N-acetyl-D-glucosamine 6-phosphate + (R)-lactate. The protein operates within amino-sugar metabolism; N-acetylmuramate degradation. In terms of biological role, specifically catalyzes the cleavage of the D-lactyl ether substituent of MurNAc 6-phosphate, producing GlcNAc 6-phosphate and D-lactate. The polypeptide is N-acetylmuramic acid 6-phosphate etherase (Trichodesmium erythraeum (strain IMS101)).